The sequence spans 812 residues: Lon protease (812 aa).

One can recognise a Lon N-terminal domain in the interval Y22–I215. Residue G367–T374 participates in ATP binding. The 182-residue stretch at E602–R783 folds into the Lon proteolytic domain. Residues S689 and K732 contribute to the active site. The disordered stretch occupies residues P787–H812.

Belongs to the peptidase S16 family. Homohexamer. Organized in a ring with a central cavity.

Its subcellular location is the cytoplasm. It carries out the reaction Hydrolysis of proteins in presence of ATP.. ATP-dependent serine protease that mediates the selective degradation of mutant and abnormal proteins as well as certain short-lived regulatory proteins. Required for cellular homeostasis and for survival from DNA damage and developmental changes induced by stress. Degrades polypeptides processively to yield small peptide fragments that are 5 to 10 amino acids long. Binds to DNA in a double-stranded, site-specific manner. This chain is Lon protease, found in Brucella suis biovar 1 (strain 1330).